A 279-amino-acid polypeptide reads, in one-letter code: Acetyl-coenzyme A carboxylase carboxyl transferase subunit beta (279 aa).

The CoA carboxyltransferase N-terminal domain maps to 23–279 (LWWKCESCGA…LSQILGHLSS (257 aa)). The Zn(2+) site is built by Cys-27, Cys-30, Cys-46, and Cys-49. A C4-type zinc finger spans residues 27–49 (CESCGAMLHKKQVEDHFYTCCEC).

It belongs to the AccD/PCCB family. In terms of assembly, acetyl-CoA carboxylase is a heterohexamer composed of biotin carboxyl carrier protein (AccB), biotin carboxylase (AccC) and two subunits each of ACCase subunit alpha (AccA) and ACCase subunit beta (AccD). Requires Zn(2+) as cofactor.

The protein resides in the cytoplasm. It carries out the reaction N(6)-carboxybiotinyl-L-lysyl-[protein] + acetyl-CoA = N(6)-biotinyl-L-lysyl-[protein] + malonyl-CoA. Its pathway is lipid metabolism; malonyl-CoA biosynthesis; malonyl-CoA from acetyl-CoA: step 1/1. In terms of biological role, component of the acetyl coenzyme A carboxylase (ACC) complex. Biotin carboxylase (BC) catalyzes the carboxylation of biotin on its carrier protein (BCCP) and then the CO(2) group is transferred by the transcarboxylase to acetyl-CoA to form malonyl-CoA. The polypeptide is Acetyl-coenzyme A carboxylase carboxyl transferase subunit beta (Prosthecochloris aestuarii (strain DSM 271 / SK 413)).